The following is a 160-amino-acid chain: Transcription elongation factor GreA (160 aa).

Residues 49 to 77 adopt a coiled-coil conformation; it reads SEYQSAKDEQAFVEGRIQTLKNMIDNAEI.

It belongs to the GreA/GreB family.

In terms of biological role, necessary for efficient RNA polymerase transcription elongation past template-encoded arresting sites. The arresting sites in DNA have the property of trapping a certain fraction of elongating RNA polymerases that pass through, resulting in locked ternary complexes. Cleavage of the nascent transcript by cleavage factors such as GreA or GreB allows the resumption of elongation from the new 3'terminus. GreA releases sequences of 2 to 3 nucleotides. The protein is Transcription elongation factor GreA of Leuconostoc mesenteroides subsp. mesenteroides (strain ATCC 8293 / DSM 20343 / BCRC 11652 / CCM 1803 / JCM 6124 / NCDO 523 / NBRC 100496 / NCIMB 8023 / NCTC 12954 / NRRL B-1118 / 37Y).